A 654-amino-acid polypeptide reads, in one-letter code: Periplasmic beta-glucosidase/beta-xylosidase (654 aa).

Positions 1–25 are cleaved as a signal peptide; it reads MEKSATRQKALLIALPLLFSPLASA. Active-site residues include D235 and D360.

This sequence belongs to the glycosyl hydrolase 3 family.

The protein localises to the periplasm. It carries out the reaction Hydrolysis of terminal, non-reducing beta-D-glucosyl residues with release of beta-D-glucose.. It catalyses the reaction Hydrolysis of (1-&gt;4)-beta-D-xylans, to remove successive D-xylose residues from the non-reducing termini.. Functionally, exhibits both beta-glucosidase and beta-xylosidase activities. The chain is Periplasmic beta-glucosidase/beta-xylosidase (bgxA) from Dickeya chrysanthemi (Pectobacterium chrysanthemi).